The primary structure comprises 163 residues: Nucleotide-binding protein RBAM_011030 (163 aa).

This sequence belongs to the YajQ family.

Nucleotide-binding protein. The polypeptide is Nucleotide-binding protein RBAM_011030 (Bacillus velezensis (strain DSM 23117 / BGSC 10A6 / LMG 26770 / FZB42) (Bacillus amyloliquefaciens subsp. plantarum)).